The sequence spans 76 residues: Omega-agatoxin-Aa3b (76 aa).

Cystine bridges form between Cys2–Cys19, Cys9–Cys25, Cys16–Cys52, Cys18–Cys40, Cys27–Cys38, and Cys59–Cys67.

Belongs to the neurotoxin 04 (omega-agtx) family. 03 (type II/III omega-agtx) subfamily. Expressed by the venom gland.

Its subcellular location is the secreted. Its function is as follows. Omega-agatoxins are antagonists of voltage-gated calcium channels. This toxin blocks calcium channels in insect central neurons but not at peripheral neuromuscular junctions. In vertebrates, it is broadly active against all high-threshold Cav1/CACNA1 channels and Cav2.2/CACNA1B channels. This chain is Omega-agatoxin-Aa3b, found in Agelenopsis aperta (North American funnel-web spider).